The following is a 790-amino-acid chain: Aryl hydrocarbon receptor nuclear translocator (790 aa).

The span at 1–10 shows a compositional bias: polar residues; that stretch reads MAATTANPEM. The disordered stretch occupies residues 1-96; that stretch reads MAATTANPEM…ERLARENHSE (96 aa). Ala-2 bears the N-acetylalanine mark. Residues 26–35 are compositionally biased toward gly residues; the sequence is PGPGIQGGGA. Lys-58 is covalently cross-linked (Glycyl lysine isopeptide (Lys-Gly) (interchain with G-Cter in SUMO2)). Residues 60-96 show a composition bias toward basic and acidic residues; sequence LRCDDDQMSNDKERFARSDDEQSSADKERLARENHSE. Residue Ser-77 is modified to Phosphoserine. Positions 88–128 are DNA-binding; it reads RLARENHSEIERRRRNKMTAYITELSDMVPTCSALARKPDK. The bHLH domain occupies 89-142; that stretch reads LARENHSEIERRRRNKMTAYITELSDMVPTCSALARKPDKLTILRMAVSHMKSL. The tract at residues 112–168 is required for heterodimer formation with HIF1A; it reads LSDMVPTCSALARKPDKLTILRMAVSHMKSLRGTGNTSTDGTYKPSFLTDQELKHLI. Positions 112–264 are required for heterodimer formation with EPAS1; the sequence is LSDMVPTCSA…MCMGSRRSFI (153 aa). 2 PAS domains span residues 161 to 235 and 349 to 419; these read DQEL…LTGR and PNCT…VKLK. The tract at residues 167–171 is mediates the transcription activity and dimerization of the AHR:ARNT complex; that stretch reads LILEA. One can recognise a PAC domain in the interval 424–467; sequence SVMFRFRSKNREWLWVRTSSFTFQNPYSDEIEYIICTNTNVKNS. 3 stretches are compositionally biased toward polar residues: residues 465–490, 520–537, and 661–679; these read KNSS…TANL, TSCN…TTGP, and TRSS…SFSP. Disordered stretches follow at residues 465–492, 514–543, 661–716, and 728–790; these read KNSS…NLSL, PGRD…SKPL, TRSS…AGQF, and PQWQ…SFSE. The span at 683–697 shows a compositional bias: low complexity; the sequence is PGASTASPGAAAYPS. The segment covering 741–755 has biased composition (polar residues); sequence SNEQHVQQPSAQQPG.

In terms of assembly, monomer. Homodimer only upon binding to a DNA. Efficient DNA binding requires dimerization with another bHLH protein. Interacts with TACC3. Interacts with HIF1A, EPAS1, NPAS1 and NPAS3; forms a heterodimer that binds core DNA sequence 5'-TACGTG-3' within the hypoxia response element (HRE) of target gene promoters. Forms a heterodimer with AHRR, as well as with other bHLH proteins. Interacts with NOCA7. Interacts with TACC3. Interacts with AHR; the heterodimer ARNT:AHR binds to core DNA sequence 5'-TGCGTG-3' within the dioxin response element (DRE) of target gene promoters and activates their transcription. Interacts with SIM1 and NPAS4.

The protein resides in the nucleus. Required for activity of the AHR. Upon ligand binding, AHR translocates into the nucleus, where it heterodimerizes with ARNT and induces transcription by binding to xenobiotic response elements (XRE). Not required for the ligand-binding subunit to translocate from the cytosol to the nucleus after ligand binding. The complex initiates transcription of genes involved in the regulation of a variety of biological processes, including angiogenesis, hematopoiesis, drug and lipid metabolism, cell motility and immune modulation. The heterodimer binds to core DNA sequence 5'-TACGTG-3' within the hypoxia response element (HRE) of target gene promoters and functions as a transcriptional regulator of the adaptive response to hypoxia. The heterodimer ARNT:AHR binds to core DNA sequence 5'-TGCGTG-3' within the dioxin response element (DRE) of target gene promoters and activates their transcription. In Bos taurus (Bovine), this protein is Aryl hydrocarbon receptor nuclear translocator (ARNT).